We begin with the raw amino-acid sequence, 305 residues long: Achromobactin-binding periplasmic protein (305 aa).

The signal sequence occupies residues 1-29 (MNEYLVSRRRLLRLSLSLLPLGLGRPALA). One can recognise a Fe/B12 periplasmic-binding domain in the interval 37–302 (RVITLFQGAT…DIARVTGIAG (266 aa)).

It belongs to the bacterial solute-binding protein 8 family.

It is found in the periplasm. Its function is as follows. Binds citrate- or chloride-dependent Fe(3+); part of the binding-protein-dependent transport system CbrABCD for uptake of the siderophore achromobactin. The protein is Achromobactin-binding periplasmic protein (cbrA) of Dickeya dadantii (strain 3937) (Erwinia chrysanthemi (strain 3937)).